The chain runs to 108 residues: Cuticle protein AM1199 (108 aa).

At Q1 the chain carries Pyrrolidone carboxylic acid. A Chitin-binding type R&amp;R domain is found at 26 to 91; sequence DGNFGYDFET…AESPLIPTPH (66 aa). T89 is a glycosylation site (O-linked (HexNAc) threonine).

Arthrodial membrane.

In Cancer pagurus (Rock crab), this protein is Cuticle protein AM1199.